A 290-amino-acid chain; its full sequence is 4-hydroxy-tetrahydrodipicolinate synthase (290 aa).

Serine 44 contacts pyruvate. The active-site Proton donor/acceptor is tyrosine 132. The active-site Schiff-base intermediate with substrate is the lysine 161. Valine 202 contacts pyruvate.

This sequence belongs to the DapA family. Homotetramer; dimer of dimers.

The protein resides in the cytoplasm. The catalysed reaction is L-aspartate 4-semialdehyde + pyruvate = (2S,4S)-4-hydroxy-2,3,4,5-tetrahydrodipicolinate + H2O + H(+). The protein operates within amino-acid biosynthesis; L-lysine biosynthesis via DAP pathway; (S)-tetrahydrodipicolinate from L-aspartate: step 3/4. In terms of biological role, catalyzes the condensation of (S)-aspartate-beta-semialdehyde [(S)-ASA] and pyruvate to 4-hydroxy-tetrahydrodipicolinate (HTPA). The chain is 4-hydroxy-tetrahydrodipicolinate synthase from Hydrogenobaculum sp. (strain Y04AAS1).